Reading from the N-terminus, the 136-residue chain is Large-conductance mechanosensitive channel (136 aa).

A run of 2 helical transmembrane segments spans residues 9–29 (AFAS…GAAF) and 79–99 (IQTV…LKAI).

It belongs to the MscL family. Homopentamer.

It localises to the cell inner membrane. Its function is as follows. Channel that opens in response to stretch forces in the membrane lipid bilayer. May participate in the regulation of osmotic pressure changes within the cell. In Shewanella sp. (strain MR-4), this protein is Large-conductance mechanosensitive channel.